Consider the following 456-residue polypeptide: Bifunctional protein GlmU (456 aa).

Positions M1 to R229 are pyrophosphorylase. UDP-N-acetyl-alpha-D-glucosamine-binding positions include L7 to G10, K21, Q73, G78 to T79, Y103 to D105, G139, E154, N169, and N227. Position 105 (D105) interacts with Mg(2+). A Mg(2+)-binding site is contributed by N227. The interval V230–A250 is linker. The N-acetyltransferase stretch occupies residues G251–S456. Residues R333 and K351 each contribute to the UDP-N-acetyl-alpha-D-glucosamine site. H363 (proton acceptor) is an active-site residue. 2 residues coordinate UDP-N-acetyl-alpha-D-glucosamine: Y366 and N377. Acetyl-CoA is bound by residues A380, N386 to Y387, S405, A423, and R440.

This sequence in the N-terminal section; belongs to the N-acetylglucosamine-1-phosphate uridyltransferase family. The protein in the C-terminal section; belongs to the transferase hexapeptide repeat family. As to quaternary structure, homotrimer. It depends on Mg(2+) as a cofactor.

The protein localises to the cytoplasm. It carries out the reaction alpha-D-glucosamine 1-phosphate + acetyl-CoA = N-acetyl-alpha-D-glucosamine 1-phosphate + CoA + H(+). The enzyme catalyses N-acetyl-alpha-D-glucosamine 1-phosphate + UTP + H(+) = UDP-N-acetyl-alpha-D-glucosamine + diphosphate. The protein operates within nucleotide-sugar biosynthesis; UDP-N-acetyl-alpha-D-glucosamine biosynthesis; N-acetyl-alpha-D-glucosamine 1-phosphate from alpha-D-glucosamine 6-phosphate (route II): step 2/2. It functions in the pathway nucleotide-sugar biosynthesis; UDP-N-acetyl-alpha-D-glucosamine biosynthesis; UDP-N-acetyl-alpha-D-glucosamine from N-acetyl-alpha-D-glucosamine 1-phosphate: step 1/1. Its pathway is bacterial outer membrane biogenesis; LPS lipid A biosynthesis. Its function is as follows. Catalyzes the last two sequential reactions in the de novo biosynthetic pathway for UDP-N-acetylglucosamine (UDP-GlcNAc). The C-terminal domain catalyzes the transfer of acetyl group from acetyl coenzyme A to glucosamine-1-phosphate (GlcN-1-P) to produce N-acetylglucosamine-1-phosphate (GlcNAc-1-P), which is converted into UDP-GlcNAc by the transfer of uridine 5-monophosphate (from uridine 5-triphosphate), a reaction catalyzed by the N-terminal domain. The polypeptide is Bifunctional protein GlmU (Bordetella petrii (strain ATCC BAA-461 / DSM 12804 / CCUG 43448)).